We begin with the raw amino-acid sequence, 347 residues long: 5-deoxyribose 1-phosphate isomerase (347 aa).

Residues 48–50, arginine 91, and glutamine 198 each bind substrate; that span reads RGA. Aspartate 239 (proton donor) is an active-site residue. A substrate-binding site is contributed by 249-250; sequence NK.

It belongs to the EIF-2B alpha/beta/delta subunits family. DrdI subfamily.

It catalyses the reaction 5-deoxy-alpha-D-ribose 1-phosphate = 5-deoxy-D-ribulose 1-phosphate. It functions in the pathway carbohydrate degradation. Its function is as follows. Catalyzes the isomerization of 5-deoxy-alpha-D-ribose 1-phosphate to 5-deoxy-D-ribulose 1-phosphate, as part of a 5-deoxyribose salvage pathway that recycles this toxic radical SAM enzyme by-product to mainstream metabolites. This is 5-deoxyribose 1-phosphate isomerase from Bacillus cereus (strain ATCC 14579 / DSM 31 / CCUG 7414 / JCM 2152 / NBRC 15305 / NCIMB 9373 / NCTC 2599 / NRRL B-3711).